A 124-amino-acid chain; its full sequence is UPF0231 protein Shewmr7_3366 (124 aa).

It belongs to the UPF0231 family.

This chain is UPF0231 protein Shewmr7_3366, found in Shewanella sp. (strain MR-7).